Here is a 562-residue protein sequence, read N- to C-terminus: MELETSVYRPNVAVYDSPDGVEVRGRYDQIFAKILTREALSFVAELQREFRGHVKYAMECRREARRRYNSGAVPGFDPSTKFIRDGDWSCASVPPAVADRRVEITGPVERKMIINALNSGAKVFMADFEDALSPSWENLMRGHVNLKDAVDGSITFHDKSRNRVYKLNDQTAKLFVRPRGWHLPEAHILIDGEPATGCLVDFGLYFFHNYAKFRQTQGSGFGPFFYLPKMEHSREAKIWNSVFERAEKMAGIERGSIRATVLIETLPAVFQMNEILYELRDHSVGLNCGRWDYIFSYVKTFQAHPDRLLPDRVLVGMGQHFMRSYSDLLIRTCHKRGVHAMGGMAAQIPIRDDPKANEMALDLVRKDKLREVRAGHDGTWAAHPGLIPICMEAFTGHMGKSPNQIKSVKREDAAAITEEDLLQIPRGVRTLEGLRLNTRVGIQYLAAWLTGSGSVPLYNLMEDAATAEISRVQNWQWIRYGVELDGDGLGVRVSKELFGRVVEEEMERIEKEVGKDKFKNGMYKEACKMFTKQCTAPELDDFLTLAVYNHIVAHYPINVSRL.

Residue Arg177 is the Proton acceptor of the active site. Asp463 acts as the Proton donor in catalysis. The Microbody targeting signal signature appears at Ser560–Leu562.

This sequence belongs to the malate synthase family.

Its subcellular location is the glyoxysome. It catalyses the reaction glyoxylate + acetyl-CoA + H2O = (S)-malate + CoA + H(+). It functions in the pathway carbohydrate metabolism; glyoxylate cycle; (S)-malate from isocitrate: step 2/2. Does not seem to be essential for lipid utilization and gluconeogenesis in seedlings. This is Malate synthase from Arabidopsis thaliana (Mouse-ear cress).